The sequence spans 422 residues: Phosphoribosylamine--glycine ligase (422 aa).

In terms of domain architecture, ATP-grasp spans 107-312 (KDVMAAAGVR…LGQLLHAAAT (206 aa)). ATP is bound at residue 137 to 193 (GPPAGDPAWVVKDDRLAAGKGVVVTADRDVARAHGAALLEAGHPVLLESYLDGPEVS). Positions 282 and 284 each coordinate Mg(2+).

It belongs to the GARS family. It depends on Mg(2+) as a cofactor. Requires Mn(2+) as cofactor.

The catalysed reaction is 5-phospho-beta-D-ribosylamine + glycine + ATP = N(1)-(5-phospho-beta-D-ribosyl)glycinamide + ADP + phosphate + H(+). It functions in the pathway purine metabolism; IMP biosynthesis via de novo pathway; N(1)-(5-phospho-D-ribosyl)glycinamide from 5-phospho-alpha-D-ribose 1-diphosphate: step 2/2. This chain is Phosphoribosylamine--glycine ligase, found in Mycobacterium bovis (strain ATCC BAA-935 / AF2122/97).